A 350-amino-acid chain; its full sequence is Gene 40 protein (350 aa).

237-244 (AVKESGKT) lines the ATP pocket.

This chain is Gene 40 protein (40), found in Bacillus phage SP01 (Bacteriophage SP01).